A 225-amino-acid chain; its full sequence is DNA-binding response regulator MtrA (225 aa).

The Response regulatory domain maps to 4–117 (RILVVDDDAS…ELVARVRARL (114 aa)). Asp-53 bears the 4-aspartylphosphate mark. A DNA-binding region (ompR/PhoB-type) is located at residues 125-224 (AEMLSIADVE…VRGVGYKAGP (100 aa)).

Post-translationally, phosphorylated by MtrB.

Functionally, member of the two-component regulatory system MtrA/MtrB. This is DNA-binding response regulator MtrA (mtrA) from Mycolicibacterium paratuberculosis (strain ATCC BAA-968 / K-10) (Mycobacterium paratuberculosis).